We begin with the raw amino-acid sequence, 481 residues long: Cysteine--tRNA ligase (481 aa).

A Zn(2+)-binding site is contributed by Cys-27. Positions 29–39 (PTVYNYAHIGN) match the 'HIGH' region motif. Residues Cys-222, His-247, and Glu-251 each coordinate Zn(2+). A 'KMSKS' region motif is present at residues 279–283 (KMSKS). ATP is bound at residue Lys-282.

The protein belongs to the class-I aminoacyl-tRNA synthetase family. As to quaternary structure, monomer. Zn(2+) serves as cofactor.

Its subcellular location is the cytoplasm. It carries out the reaction tRNA(Cys) + L-cysteine + ATP = L-cysteinyl-tRNA(Cys) + AMP + diphosphate. The chain is Cysteine--tRNA ligase from Borrelia turicatae (strain 91E135).